The primary structure comprises 300 residues: Protoheme IX farnesyltransferase (300 aa).

The next 9 helical transmembrane spans lie at 26-46 (VVQL…PGLP), 54-74 (IAWA…FNCI), 102-122 (LLFS…LVNP), 123-143 (LTMW…TLIL), 150-170 (NIVI…AAMT), 177-197 (ALIL…ALAL), 224-244 (VLLY…YGMS), 246-266 (WPYL…GFAL), and 279-299 (FRFS…DHYL).

The protein belongs to the UbiA prenyltransferase family. Protoheme IX farnesyltransferase subfamily.

Its subcellular location is the cell inner membrane. It catalyses the reaction heme b + (2E,6E)-farnesyl diphosphate + H2O = Fe(II)-heme o + diphosphate. Its pathway is porphyrin-containing compound metabolism; heme O biosynthesis; heme O from protoheme: step 1/1. Its function is as follows. Converts heme B (protoheme IX) to heme O by substitution of the vinyl group on carbon 2 of heme B porphyrin ring with a hydroxyethyl farnesyl side group. This chain is Protoheme IX farnesyltransferase, found in Verminephrobacter eiseniae (strain EF01-2).